Consider the following 429-residue polypeptide: Palmitoyltransferase SWF1 (429 aa).

Topologically, residues 1-3 are lumenal; that stretch reads MGT. The chain crosses the membrane as a helical span at residues 4–24; that stretch reads IAIIAAVILGISFMTFVAFFG. Residues 25–79 lie on the Cytoplasmic side of the membrane; that stretch reads RLPALRNTPISFLHRLIWIHLPNGILTVDRTLTNGRLTTSLTRLGRHLWYDQHPT. A helical transmembrane segment spans residues 80–100; that stretch reads ILIFFFLLLSVGEYLYLPVAW. The Lumenal portion of the chain corresponds to 101 to 112; that stretch reads PHFSFTHKFFGT. Residues 113–133 traverse the membrane as a helical segment; it reads IAILCPYIFLYLSAYTDPGVI. Residues 134 to 201 lie on the Cytoplasmic side of the membrane; that stretch reads NAKTHVREMA…CVGANNQRWF (68 aa). The region spanning 156–206 is the DHHC domain; the sequence is TSCETCHLLKPARSKHCSICKKCVGRMDHHCIFINNCVGANNQRWFILLLL. Residues 202–222 form a helical membrane-spanning segment; that stretch reads ILLLLSTAILTLYGGVLGLVI. The Lumenal segment spans residues 223–274; that stretch reads IRAKIQARFPYWTLMPWWTSTQAWNSGDLDFHRWLLLWSWGLQSGVAMGGVT. Residues 275–295 traverse the membrane as a helical segment; it reads LLALLTTPLVWGLLGYHLWLV. Residues 296–429 lie on the Cytoplasmic side of the membrane; the sequence is YCGTTTNESM…ERGRNRRRSS (134 aa). Basic and acidic residues predominate over residues 408–421; it reads GRSPVDEREFGRER. Residues 408–429 are disordered; the sequence is GRSPVDEREFGRERGRNRRRSS.

The protein belongs to the DHHC palmitoyltransferase family. SWF1 subfamily.

The protein localises to the endoplasmic reticulum membrane. The enzyme catalyses L-cysteinyl-[protein] + hexadecanoyl-CoA = S-hexadecanoyl-L-cysteinyl-[protein] + CoA. Functionally, palmitoyltransferase that targets several endosomal SNAREs. Palmitoylates the SNAREs at cysteine residues close to the cytoplasmic end of their transmembrane domain. May have a role in the cellular quality control of transmembrane domain-containing proteins. This Neurospora crassa (strain ATCC 24698 / 74-OR23-1A / CBS 708.71 / DSM 1257 / FGSC 987) protein is Palmitoyltransferase SWF1 (swf-1).